Consider the following 99-residue polypeptide: Integration host factor subunit beta (99 aa).

It belongs to the bacterial histone-like protein family. In terms of assembly, heterodimer of an alpha and a beta chain.

This protein is one of the two subunits of integration host factor, a specific DNA-binding protein that functions in genetic recombination as well as in transcriptional and translational control. This Rhizobium etli (strain CIAT 652) protein is Integration host factor subunit beta.